A 418-amino-acid chain; its full sequence is MDMLHPSSVSTTSEPENASSAWPPDATLGNVSAGPSPAGLAVSGVLIPLVYLVVCVVGLLGNSLVIYVVLRHTASPSVTNVYILNLALADELFMLGLPFLAAQNALSYWPFGSLMCRLVMAVDGINQFTSIFCLTVMSVDRYLAVVHPTRSARWRTAPVARTVSAAVWVASAVVVLPVVVFSGVPRGMSTCHMQWPEPAAAWRAGFIIYTAALGFFGPLLVICLCYLLIVVKVRSAGRRVWAPSCQRRRRSERRVTRMVVAVVALFVLCWMPFYVLNIVNVVCPLPEEPAFFGLYFLVVALPYANSCANPILYGFLSYRFKQGFRRVLLRPSRRVRSQEPTVGPPEKTEEEDEEEEDGEESREGGKGKEMNGRVSQITQPGTSGQERPPSRVASKEQQLLPQEASTGEKSSTMRISYL.

The interval 1-21 is disordered; that stretch reads MDMLHPSSVSTTSEPENASSA. Residues 1 to 43 lie on the Extracellular side of the membrane; it reads MDMLHPSSVSTTSEPENASSAWPPDATLGNVSAGPSPAGLAVS. Polar residues predominate over residues 7-20; it reads SSVSTTSEPENASS. 2 N-linked (GlcNAc...) asparagine glycosylation sites follow: Asn-17 and Asn-30. The helical transmembrane segment at 44–69 threads the bilayer; the sequence is GVLIPLVYLVVCVVGLLGNSLVIYVV. The Cytoplasmic segment spans residues 70–79; it reads LRHTASPSVT. The chain crosses the membrane as a helical span at residues 80-101; that stretch reads NVYILNLALADELFMLGLPFLA. Topologically, residues 102 to 116 are extracellular; sequence AQNALSYWPFGSLMC. Cys-116 and Cys-191 form a disulfide bridge. The chain crosses the membrane as a helical span at residues 117 to 138; it reads RLVMAVDGINQFTSIFCLTVMS. Residues 139 to 161 lie on the Cytoplasmic side of the membrane; sequence VDRYLAVVHPTRSARWRTAPVAR. The helical transmembrane segment at 162–181 threads the bilayer; the sequence is TVSAAVWVASAVVVLPVVVF. Residues 182–205 lie on the Extracellular side of the membrane; that stretch reads SGVPRGMSTCHMQWPEPAAAWRAG. Residues 206-231 traverse the membrane as a helical segment; the sequence is FIIYTAALGFFGPLLVICLCYLLIVV. The Cytoplasmic portion of the chain corresponds to 232–257; that stretch reads KVRSAGRRVWAPSCQRRRRSERRVTR. Residues 258–279 form a helical membrane-spanning segment; sequence MVVAVVALFVLCWMPFYVLNIV. The Extracellular segment spans residues 280–293; sequence NVVCPLPEEPAFFG. Residues 294 to 316 form a helical membrane-spanning segment; the sequence is LYFLVVALPYANSCANPILYGFL. Residues 317 to 418 lie on the Cytoplasmic side of the membrane; it reads SYRFKQGFRR…KSSTMRISYL (102 aa). Residues Ser-332 and Ser-337 each carry the phosphoserine modification. The interval 335–418 is disordered; it reads VRSQEPTVGP…KSSTMRISYL (84 aa). Residue Thr-348 is modified to Phosphothreonine. A compositionally biased stretch (acidic residues) spans 348-360; sequence TEEEDEEEEDGEE. Over residues 361 to 371 the composition is skewed to basic and acidic residues; the sequence is SREGGKGKEMN. Composition is skewed to polar residues over residues 373–385 and 395–418; these read RVSQ…TSGQ and KEQQ…ISYL.

It belongs to the G-protein coupled receptor 1 family. In terms of assembly, homodimer and heterodimer with SSTR2. Heterodimerization with SSTR2 inactivates SSTR3 receptor function. In terms of processing, phosphorylated. Phosphorylation increases upon somatostatin binding. In terms of tissue distribution, brain, pituitary and pancreas.

It is found in the cell membrane. Receptor for somatostatin-14 and -28. This receptor is coupled via pertussis toxin sensitive G proteins to inhibition of adenylyl cyclase. The sequence is that of Somatostatin receptor type 3 (SSTR3) from Homo sapiens (Human).